We begin with the raw amino-acid sequence, 736 residues long: MEIGTEISRKIRSAIKGKLQELGAYVDEELPDYIMVMVANKKSQDQMTEDLSLFLGNNTIRFTVWLHGVLDKLRSVTTEPSSLKSPDTSIFDSNVPSNKSSFSRGDERRHEAAIPPLAVSSSRPEKRDSRVSTSSQEHKSTNVRHSYDDGASTRLMSTVKPLREPAPSEDVIDIKPEPDDLIDEDLNFVQENSLSQKKPTVTLTYGSSRPSIEIYRPPASRNADTGTHLNRPQLQQQQSSTHTAKQLDGQSSQVYEAGRLCEPEVLGSVEDTYSPFFRNNLDKMNIEEENFRKRKLPVVSSVVKVKRFSHDGEEEEEDEDYGTRVGSLSSSVSVPAKPERRPSLPPSKQANKNLILKAISEAQESVTKTTNYPAVPQKQTLPVAPRTRTSQEEVLAEMVQGQNRAPRISPPVKEEEAKGDNAEKIEGTQQRQLLSRLQIDPVTVDTMELSQDYYDMESMVHADTRSFILKKPKLSEEIVVTPNQDSGMKTADALRVLSGHLMQTRDLVQPDKPASPKFIVTLDGVPSPPGYMSDQEEEMCFEGMKPVNQTSASNKGLRGLLHPQQLHLLSRQLEDPDGSFSNAEMTDLSVAQKPEKLLERCKYWPACKNGDECVYHHPISPCKAFPNCKFAEKCLFVHPNCKYDAKCTKADCPFTHMSRRGPVLTPKPAVSSPAPSSNGQFCRYFPACKKMECPFYHPKHCRFNTQCTRPDCTFYHPTITVPPRHALKWIRPQTSE.

Met1 bears the N-acetylmethionine mark. Residues 77–103 are compositionally biased toward polar residues; the sequence is TTEPSSLKSPDTSIFDSNVPSNKSSFS. A disordered region spans residues 77 to 153; sequence TTEPSSLKSP…RHSYDDGAST (77 aa). A Phosphoserine modification is found at Ser85. Glycyl lysine isopeptide (Lys-Gly) (interchain with G-Cter in SUMO2) cross-links involve residues Lys99, Lys139, Lys175, and Lys198. The span at 123–148 shows a compositional bias: basic and acidic residues; it reads RPEKRDSRVSTSSQEHKSTNVRHSYD. Ser240 is modified (phosphoserine). Residues Lys245, Lys283, and Lys295 each participate in a glycyl lysine isopeptide (Lys-Gly) (interchain with G-Cter in SUMO2) cross-link. Residues 308 to 350 form a disordered region; it reads FSHDGEEEEEDEDYGTRVGSLSSSVSVPAKPERRPSLPPSKQA. Ser309, Ser327, and Ser343 each carry phosphoserine. The residue at position 357 (Lys357) is an N6-acetyllysine; alternate. Residue Lys357 forms a Glycyl lysine isopeptide (Lys-Gly) (interchain with G-Cter in SUMO2); alternate linkage. Positions 367–380 are enriched in polar residues; sequence TKTTNYPAVPQKQT. Positions 367–386 are disordered; it reads TKTTNYPAVPQKQTLPVAPR. A Glycyl lysine isopeptide (Lys-Gly) (interchain with G-Cter in SUMO2) cross-link involves residue Lys378. A phosphoserine mark is found at Ser390 and Ser409. The tract at residues 400–420 is disordered; it reads QGQNRAPRISPPVKEEEAKGD. Glycyl lysine isopeptide (Lys-Gly) (interchain with G-Cter in SUMO2) cross-links involve residues Lys413 and Lys489. 4 positions are modified to phosphoserine: Ser498, Ser515, Ser527, and Ser620. C3H1-type zinc fingers lie at residues 595-620, 621-640, 641-656, 682-699, and 701-719; these read EKLL…HPIS, PCKA…VHPN, CKYD…PFTH, CRYF…YHPK, and CRFN…HPTI.

This sequence belongs to the ZC3H14 family. In terms of assembly, homodimer; facilitating circular RNAs (circRNAs) formation. Associates with the spliceosome. Interacts with HOOK2. Interacts with ZFC3H1 in a RNase-sensitive manner.

The protein resides in the nucleus speckle. Its function is as follows. RNA-binding protein involved in the biogenesis of circular RNAs (circRNAs), which are produced by back-splicing circularization of pre-mRNAs. Acts by binding to both exon-intron boundary and 3'-UTR of pre-mRNAs to promote circRNA biogenesis through dimerization and the association with the spliceosome. Required for spermatogenesis via involvement in circRNA biogenesis. Regulates the pre-mRNA processing of ATP5MC1; preventing its degradation. Also binds the poly(A) tail of mRNAs; controlling poly(A) length in neuronal cells. This Rattus norvegicus (Rat) protein is Zinc finger CCCH domain-containing protein 14.